A 253-amino-acid polypeptide reads, in one-letter code: uncharacterized protein (253 aa).

Residues 211–235 (DEPEPAQPTLTVPSAQPVSNRRGKP) are disordered. The segment covering 218–229 (PTLTVPSAQPVS) has biased composition (polar residues).

This is an uncharacterized protein from Mycobacterium tuberculosis (strain CDC 1551 / Oshkosh).